Consider the following 242-residue polypeptide: Methylthioribulose-1-phosphate dehydratase (242 aa).

Basic and acidic residues predominate over residues 1 to 11 (MAQEIQKENND). A disordered region spans residues 1 to 20 (MAQEIQKENNDHLVQSSDPE). Residue cysteine 100 participates in substrate binding. Residues histidine 117 and histidine 119 each coordinate Zn(2+). The Proton donor/acceptor role is filled by glutamate 146. Zn(2+) is bound at residue histidine 202.

This sequence belongs to the aldolase class II family. MtnB subfamily. The cofactor is Zn(2+).

The protein localises to the cytoplasm. It catalyses the reaction 5-(methylsulfanyl)-D-ribulose 1-phosphate = 5-methylsulfanyl-2,3-dioxopentyl phosphate + H2O. Its pathway is amino-acid biosynthesis; L-methionine biosynthesis via salvage pathway; L-methionine from S-methyl-5-thio-alpha-D-ribose 1-phosphate: step 2/6. Catalyzes the dehydration of methylthioribulose-1-phosphate (MTRu-1-P) into 2,3-diketo-5-methylthiopentyl-1-phosphate (DK-MTP-1-P). This chain is Methylthioribulose-1-phosphate dehydratase, found in Aspergillus niger (strain ATCC MYA-4892 / CBS 513.88 / FGSC A1513).